The sequence spans 348 residues: Flagellar P-ring protein (348 aa).

An N-terminal signal peptide occupies residues 1-16 (MRVLTIFLLFMTSIFA).

This sequence belongs to the FlgI family. The basal body constitutes a major portion of the flagellar organelle and consists of four rings (L,P,S, and M) mounted on a central rod.

Its subcellular location is the periplasm. It localises to the bacterial flagellum basal body. Functionally, assembles around the rod to form the L-ring and probably protects the motor/basal body from shearing forces during rotation. This chain is Flagellar P-ring protein, found in Campylobacter jejuni subsp. jejuni serotype O:23/36 (strain 81-176).